Reading from the N-terminus, the 272-residue chain is Prohibitin 1 (272 aa).

A coiled-coil region spans residues 177-211 (KEFTEAVEMKQVAQQEAERARFIVEKAEQQKKAAV).

As to quaternary structure, the mitochondrial prohibitin complex consists of two subunits (PHB1 and PHB2), assembled into a membrane-associated ring-shaped supercomplex of approximately 1 mDa.

The protein localises to the mitochondrion inner membrane. Its subcellular location is the nucleus. It localises to the cytoplasm. The protein resides in the cell membrane. Its function is as follows. Protein with pleiotropic attributes mediated in a cell-compartment- and tissue-specific manner, which include the plasma membrane-associated cell signaling functions, mitochondrial chaperone, and transcriptional co-regulator of transcription factors in the nucleus. In the mitochondria, together with PHB2, forms large ring complexes (prohibitin complexes) in the inner mitochondrial membrane (IMM) and functions as a chaperone protein that stabilizes mitochondrial respiratory enzymes and maintains mitochondrial integrity in the IMM, which is required for mitochondrial morphogenesis, neuronal survival, and normal lifespan. In terms of biological role, in the nucleus, acts as a transcription coregulator, enhances promoter binding by TP53, a transcription factor it activates, but reduces the promoter binding by E2F1, a transcription factor it represses. Functionally, in the plasma membrane, cooperates with CD86 to mediate CD86-signaling in B lymphocytes that regulates the level of IgG1 produced through the activation of distal signaling intermediates. Upon CD40 engagement, required to activate NF-kappa-B signaling pathway via phospholipase C and protein kinase C activation. The polypeptide is Prohibitin 1 (PHB1) (Gallus gallus (Chicken)).